Consider the following 725-residue polypeptide: Dolichyl-phosphate-mannose--protein mannosyltransferase 5 (725 aa).

Transmembrane regions (helical) follow at residues 34–54 (QFAV…LYIP), 117–137 (YLWL…LTFF), 145–165 (SVIS…VTVS), 192–212 (IPFT…LGLN), 219–239 (GLFT…EILG), and 256–276 (VVAF…IHFE). MIR domains follow at residues 303–356 (PLQV…IETK), 368–427 (QREV…IRML), and 439–495 (LIKL…VESS). Asn-409 is a glycosylation site (N-linked (GlcNAc...) asparagine). The next 4 helical transmembrane spans lie at 570-590 (IYYL…LIAI), 619-639 (FYNN…PYCL), 644-664 (LYLH…SQYL), and 673-693 (IIGG…FYEF).

The protein belongs to the glycosyltransferase 39 family.

Its subcellular location is the endoplasmic reticulum membrane. It carries out the reaction a di-trans,poly-cis-dolichyl beta-D-mannosyl phosphate + L-seryl-[protein] = 3-O-(alpha-D-mannosyl)-L-seryl-[protein] + a di-trans,poly-cis-dolichyl phosphate + H(+). The enzyme catalyses a di-trans,poly-cis-dolichyl beta-D-mannosyl phosphate + L-threonyl-[protein] = 3-O-(alpha-D-mannosyl)-L-threonyl-[protein] + a di-trans,poly-cis-dolichyl phosphate + H(+). The protein operates within protein modification; protein glycosylation. Its function is as follows. Protein mannosyltransferase (PMT) involved in hyphal morphogenesis and drug sensitivity. Transfers mannose from Dol-P-mannose to Ser or Thr residues on proteins. PMT1, PMT2 and PMT4 account for most of the protein-O-glycosylation activity, while PMT5 and PMT6 may specifically modulate a much narrower spectrum of target proteins. Required for biofilm formation. The chain is Dolichyl-phosphate-mannose--protein mannosyltransferase 5 from Candida albicans (strain SC5314 / ATCC MYA-2876) (Yeast).